Here is a 338-residue protein sequence, read N- to C-terminus: Aspartate--ammonia ligase (338 aa).

This sequence belongs to the class-II aminoacyl-tRNA synthetase family. AsnA subfamily.

The protein resides in the cytoplasm. It catalyses the reaction L-aspartate + NH4(+) + ATP = L-asparagine + AMP + diphosphate + H(+). It functions in the pathway amino-acid biosynthesis; L-asparagine biosynthesis; L-asparagine from L-aspartate (ammonia route): step 1/1. In Lactobacillus delbrueckii subsp. bulgaricus (strain ATCC BAA-365 / Lb-18), this protein is Aspartate--ammonia ligase.